The primary structure comprises 231 residues: MKVGIIGAMQQEVAILKEAMTNAQTVNKAGCTFYSGQINGVEVVLLQSGIGKVAAAIGTTILLDEYQPDMVLNTGSAGGFDSSLNLGDVVISTEVRHHDADVTAFGYEMGQMAGQPAAFLADEKLMNLAEKALEQMDGQHAVRGLICTGDAFVCTAERQAFIRQHFPSVIAVEMEASAIAQTCHQFKVPFVVVRAISDVADKESPMSFEEFLPLAAKSSSEMVFKMLELLK.

The active-site Proton acceptor is Glu-12. Substrate contacts are provided by residues Gly-78, Val-153, and 174-175 (ME). Asp-198 acts as the Proton donor in catalysis.

This sequence belongs to the PNP/UDP phosphorylase family. MtnN subfamily.

It catalyses the reaction S-adenosyl-L-homocysteine + H2O = S-(5-deoxy-D-ribos-5-yl)-L-homocysteine + adenine. It carries out the reaction S-methyl-5'-thioadenosine + H2O = 5-(methylsulfanyl)-D-ribose + adenine. The enzyme catalyses 5'-deoxyadenosine + H2O = 5-deoxy-D-ribose + adenine. It participates in amino-acid biosynthesis; L-methionine biosynthesis via salvage pathway; S-methyl-5-thio-alpha-D-ribose 1-phosphate from S-methyl-5'-thioadenosine (hydrolase route): step 1/2. Its function is as follows. Catalyzes the irreversible cleavage of the glycosidic bond in both 5'-methylthioadenosine (MTA) and S-adenosylhomocysteine (SAH/AdoHcy) to adenine and the corresponding thioribose, 5'-methylthioribose and S-ribosylhomocysteine, respectively. Also cleaves 5'-deoxyadenosine, a toxic by-product of radical S-adenosylmethionine (SAM) enzymes, into 5-deoxyribose and adenine. The protein is 5'-methylthioadenosine/S-adenosylhomocysteine nucleosidase of Vibrio vulnificus (strain YJ016).